The sequence spans 454 residues: Tetrahydroanabasine acetyltransferase (454 aa).

Residues His164 and Asp389 each act as proton acceptor in the active site.

It belongs to the plant acyltransferase family. In terms of assembly, monomer.

The catalysed reaction is tetrahydroanabasine + acetyl-CoA = ammodendrine + CoA. It participates in alkaloid biosynthesis. In terms of biological role, tetrahydroanabasine acetyltransferase involved in the accumulation of quinolizidine type antinutritional alkaloids (QAs) natural products. QAs impart a bitter taste to plants, acting as repellents and toxicants for herbivores and predators, and possess a variety of pharmacological effects, including sedative, anticonvulsant, anti-inflammatory, antiviral, antitumor, antipyretic, anti-hepatitis B, antifibrotic, antiallergic, antidiarrheal, analgesic and antimicrobial activities. Mediates the conversion of tetrahydroanabasine into ammodendrine. This Lupinus albus (White lupine) protein is Tetrahydroanabasine acetyltransferase.